The sequence spans 424 residues: MKKLLFAIPLVVPFYSHSAETVESCLAKPHTENSFTNVWKDDKTLDRYANYEGCLWNATGVVVCTGDETQCYGTWVPIGLAIPENEGGGSEGGGSEGGGSEGGGTKPPEYGDTPIPGYTYINPLDGTYPPGTEQNPANPNPSLEESQPLNTFMFQNNRFRNRQGALTVYTGTVTQGTDPVKTYYQYTPVSSKAMYDAYWNGKFRDCAFHSGFNEDPFVCEYQGQSSDLPQPPVNAGGGSGGGSGGGSEGGGSEGGGSEGGGSEGGGSGGGSGSGDFDYEKMANANKGAMTENADENALQSDAKGKLDSVATDYGAAIDGFIGDVSGLANGNGATGDFAGSNSQMAQVGDGDNSPLMNNFRQYLPSLPQSVECRPYVFGAGKPYEFSIDCDKINLFRGVFAFLLYVATFMYVFSTFANILRNKES.

The N-terminal stretch at 1 to 18 (MKKLLFAIPLVVPFYSHS) is a signal peptide. The interval 19–85 (AETVESCLAK…VPIGLAIPEN (67 aa)) is N1. Disulfide bonds link C25–C54 and C64–C71. Residues 83-147 (PENEGGGSEG…NPNPSLEESQ (65 aa)) are disordered. The G1 (Gly-rich linker) stretch occupies residues 86–104 (EGGGSEGGGSEGGGSEGGG). Residues 86–105 (EGGGSEGGGSEGGGSEGGGT) are compositionally biased toward gly residues. Residues 105 to 141 (TKPPEYGDTPIPGYTYINPLDGTYPPGTEQNPANPNP) form a hinge region. The span at 132-147 (TEQNPANPNPSLEESQ) shows a compositional bias: polar residues. Residues 142–228 (SLEESQPLNT…CEYQGQSSDL (87 aa)) form an N2 region. An intrachain disulfide couples C206 to C219. The disordered stretch occupies residues 222–279 (QGQSSDLPQPPVNAGGGSGGGSGGGSEGGGSEGGGSEGGGSEGGGSGGGSGSGDFDYE). The segment covering 235–273 (AGGGSGGGSGGGSEGGGSEGGGSEGGGSEGGGSGGGSGS) has biased composition (gly residues). Residues 253–262 (EGGGSEGGGS) are not essential for gene 3 function. A CT region spans residues 275 to 424 (DFDYEKMANA…FANILRNKES (150 aa)). A helical transmembrane segment spans residues 398 to 418 (VFAFLLYVATFMYVFSTFANI).

This sequence belongs to the inovirus G3P protein family. Interacts with G6P; this interaction is required for proper integration of G3P and G6P into the virion. Interacts with G8P. Interacts with the tip of the host pilus. Interacts (via N-terminus) with host TolA. Interacts (via transmembrane domain) with host TolQ (via 2nd and 3rd transmembrane domains); this interaction allows the phage translocation across the host inner membrane. Interacts (via transmembrane domain) with host TolR (via transmembrane domain); this interaction allows the phage translocation across the host inner membrane.

It localises to the virion. It is found in the host membrane. Its function is as follows. Plays essential roles both in the penetration of the viral genome into the bacterial host via pilus retraction and in the extrusion process. During the initial step of infection, G3P mediates adsorption of the phage to its primary receptor, the tip of host F-pilus. Attachment of the phage causes pilus retraction bringing the viral particle into close proximity of the host cell inner membrane. Binding to the host pilus initiates a change in the G3P conformation, allowing subsequent interaction with the host entry receptors TolA, TolQ and TolR and penetration of the viral DNA into the host cytoplasm. In the extrusion process, G3P mediates the release of the membrane-anchored virion from the cell via its C-terminal domain. The sequence is that of Attachment protein G3P (III) from Enterobacteria phage fd (Bacteriophage fd).